Reading from the N-terminus, the 394-residue chain is Mitogen-activated protein kinase homolog D5 (394 aa).

Positions 62–347 (RPPIMPIGKG…VENALAHPYL (286 aa)) constitute a Protein kinase domain. Residues 68–76 (IGKGAYGIV) and Lys-91 contribute to the ATP site. Asp-188 functions as the Proton acceptor in the catalytic mechanism. Phosphothreonine is present on Thr-220. Residues 220-222 (TEY) carry the TXY motif. Tyr-222 is subject to Phosphotyrosine.

Belongs to the protein kinase superfamily. CMGC Ser/Thr protein kinase family. MAP kinase subfamily. It depends on Mg(2+) as a cofactor. Post-translationally, dually phosphorylated on Thr-220 and Tyr-222, which activates the enzyme. As to expression, leaves, roots, root apices, and dormant and growing axillary buds.

The catalysed reaction is L-seryl-[protein] + ATP = O-phospho-L-seryl-[protein] + ADP + H(+). The enzyme catalyses L-threonyl-[protein] + ATP = O-phospho-L-threonyl-[protein] + ADP + H(+). Its activity is regulated as follows. Activated by tyrosine and threonine phosphorylation. This Pisum sativum (Garden pea) protein is Mitogen-activated protein kinase homolog D5.